Consider the following 370-residue polypeptide: Probable aspartic-type endopeptidase ARB_04018 (370 aa).

Positions 1–21 (MWHSPFSTAFTLFLGFFTLTL) are cleaved as a signal peptide. 2 N-linked (GlcNAc...) asparagine glycosylation sites follow: asparagine 80 and asparagine 102. The region spanning 94–367 (FVNEITIGND…DHDGPKMGFA (274 aa)) is the Peptidase A1 domain. Aspartate 110 is a catalytic residue. N-linked (GlcNAc...) asparagine glycosylation occurs at asparagine 251. Residue aspartate 261 is part of the active site. A glycan (N-linked (GlcNAc...) asparagine) is linked at asparagine 298.

This sequence belongs to the peptidase A1 family.

It localises to the secreted. Probable aspartic-type endopeptidase which contributes to virulence. The protein is Probable aspartic-type endopeptidase ARB_04018 of Arthroderma benhamiae (strain ATCC MYA-4681 / CBS 112371) (Trichophyton mentagrophytes).